The primary structure comprises 161 residues: Regulator of ribonuclease activity A (161 aa).

The protein belongs to the RraA family. In terms of assembly, homotrimer. Binds to both RNA-binding sites in the C-terminal region of Rne and to RhlB.

The protein resides in the cytoplasm. In terms of biological role, globally modulates RNA abundance by binding to RNase E (Rne) and regulating its endonucleolytic activity. Can modulate Rne action in a substrate-dependent manner by altering the composition of the degradosome. Modulates RNA-binding and helicase activities of the degradosome. The polypeptide is Regulator of ribonuclease activity A (Enterobacter sp. (strain 638)).